Consider the following 65-residue polypeptide: uncharacterized protein (65 aa).

Residues 1–20 are Cytoplasmic-facing; it reads MRFSNCFNKFKFCIGTEKKY. Residues 21–43 traverse the membrane as a helical segment; sequence SFPICTSTYTSFSLFACIWSIFI. At 44-65 the chain is on the extracellular side; it reads HISLNKSFIYQKSWYYSFFQNR.

The protein resides in the host membrane. This is an uncharacterized protein from Acidianus sp. F28 (AFV-2).